The following is a 407-amino-acid chain: Indoleamine 2,3-dioxygenase 1 (407 aa).

Histidine 350 is a binding site for heme b. Residues 362 to 388 (SKQKPMGGHKSEEPSNTENRGTGGTDV) form a disordered region.

This sequence belongs to the indoleamine 2,3-dioxygenase family. Monomer. The cofactor is heme b.

Its subcellular location is the cytoplasm. The protein resides in the cytosol. The catalysed reaction is D-tryptophan + O2 = N-formyl-D-kynurenine. It catalyses the reaction L-tryptophan + O2 = N-formyl-L-kynurenine. Activity is inhibited by and MTH-trp (methylthiohydantoin-DL-tryptophan), modestly inhibited by L-1MT (1-methyl-L-tryptophan) but not D-1MT (1-methyl-D-tryptophan). Catalyzes the first and rate limiting step of the catabolism of the essential amino acid tryptophan along the kynurenine pathway. Involved in the peripheral immune tolerance, contributing to maintain homeostasis by preventing autoimmunity or immunopathology that would result from uncontrolled and overreacting immune responses. Tryptophan shortage inhibits T lymphocytes division and accumulation of tryptophan catabolites induces T-cell apoptosis and differentiation of regulatory T-cells. Acts as a suppressor of anti-tumor immunity. Limits the growth of intracellular pathogens by depriving tryptophan. Protects the fetus from maternal immune rejection. The polypeptide is Indoleamine 2,3-dioxygenase 1 (Rattus norvegicus (Rat)).